The primary structure comprises 178 residues: MTEAHATDAGGPAVPQTRMARHRRIVDILNRQPVRSQSQLAKLLADNGLSVTQATLSRDLDELGAVKIRNTMARLIYAVPARGVPHSAGALGESAKEERMRRLAGELLISAEASANLVVLRTPPGAAQFLASAIDQAELHDILGTIAGDDTLMLISRSPTGGQALADHLLRLAQNDRA.

It belongs to the ArgR family.

The protein resides in the cytoplasm. It functions in the pathway amino-acid biosynthesis; L-arginine biosynthesis [regulation]. In terms of biological role, regulates arginine biosynthesis genes. The sequence is that of Arginine repressor (argR) from Streptomyces clavuligerus.